Here is a 314-residue protein sequence, read N- to C-terminus: THAP domain-containing protein 11 (314 aa).

The THAP-type zinc-finger motif lies at 1-80; the sequence is MPGFTCCVPG…TYTVRVPTIF (80 aa). The interval 85–111 is disordered; it reads VNERKVARRPAGAAAARRRQQQQQQQQ. Residues 93–111 are compositionally biased toward low complexity; sequence RPAGAAAARRRQQQQQQQQ. An HCFC1-binding motif (HBM) motif is present at residues 243-246; it reads DHSY. A coiled-coil region spans residues 255–305; the sequence is EELLRKLNEQRDILALMEVKMKEMKGSIRHLRLTEAKLREELREKDRLLAM.

This sequence belongs to the THAP11 family. Forms homodimers. Interacts via HBM with HCFC1. Forms a complex with HCFC1 and ZNF143. As to expression, expressed in skin fibroblasts.

The protein resides in the nucleus. It is found in the cytoplasm. Its function is as follows. Transcription factor, which has both transcriptional activation and repression activities. Also modulates chromatin accessibility. In complex with HCFC1 and ZNF143, regulates the expression of several genes, including AP2S1, ESCO2, OPHN1, RBL1, UBXN8 and ZNF32. May regulate the expression of genes that encode both cytoplasmic and mitochondrial ribosomal proteins. Required for normal mitochondrial development and function. Regulates mitochondrial gene expression, including that of components of the electron transport chain. Involved in the maintainance of pluripotency in early embryonic cells, possibly through its action on mitochondrial maturation which is required to meet high energy demands of these cells. Required for early development of retina, preventing premature exit of retinal progenitor cells from the cell cycle. This effect may also be mediated by its action on mitochondria. Through the regulation of MMACHC gene expression, controls cobalamin metabolism. Required for normal brain development and neural precursor differentiation. Involved in cell growth. This Homo sapiens (Human) protein is THAP domain-containing protein 11 (THAP11).